The sequence spans 388 residues: Succinate--CoA ligase [ADP-forming] subunit beta (388 aa).

One can recognise an ATP-grasp domain in the interval 9–244 (KEILRQAGVP…LDEEDPAEVE (236 aa)). ATP-binding positions include Lys46, 53–55 (GRG), Glu99, Ala102, and Glu107. 2 residues coordinate Mg(2+): Asn199 and Asp213. Substrate-binding positions include Asn264 and 321–323 (GIM).

The protein belongs to the succinate/malate CoA ligase beta subunit family. Heterotetramer of two alpha and two beta subunits. The cofactor is Mg(2+).

It catalyses the reaction succinate + ATP + CoA = succinyl-CoA + ADP + phosphate. The catalysed reaction is GTP + succinate + CoA = succinyl-CoA + GDP + phosphate. The protein operates within carbohydrate metabolism; tricarboxylic acid cycle; succinate from succinyl-CoA (ligase route): step 1/1. Its function is as follows. Succinyl-CoA synthetase functions in the citric acid cycle (TCA), coupling the hydrolysis of succinyl-CoA to the synthesis of either ATP or GTP and thus represents the only step of substrate-level phosphorylation in the TCA. The beta subunit provides nucleotide specificity of the enzyme and binds the substrate succinate, while the binding sites for coenzyme A and phosphate are found in the alpha subunit. The chain is Succinate--CoA ligase [ADP-forming] subunit beta from Albidiferax ferrireducens (strain ATCC BAA-621 / DSM 15236 / T118) (Rhodoferax ferrireducens).